The sequence spans 460 residues: Probable protein phosphatase 2C 38 (460 aa).

Disordered regions lie at residues 1-30 (MVAV…AVPS) and 83-111 (RPMR…GRIA). A compositionally biased stretch (basic and acidic residues) spans 100–109 (PRDREPRDGR). The PPM-type phosphatase domain occupies 118–432 (AASLYTMRGN…DDCAVVCLFL (315 aa)). Mn(2+)-binding residues include D154 and G155. The segment at 192-219 (VTSSMTEGGGTERMDRDTETPLGTEENG) is disordered. Over residues 201-210 (GTERMDRDTE) the composition is skewed to basic and acidic residues. Mn(2+) is bound by residues D377 and D423.

It belongs to the PP2C family. It depends on Mg(2+) as a cofactor. The cofactor is Mn(2+).

It catalyses the reaction O-phospho-L-seryl-[protein] + H2O = L-seryl-[protein] + phosphate. The catalysed reaction is O-phospho-L-threonyl-[protein] + H2O = L-threonyl-[protein] + phosphate. The chain is Probable protein phosphatase 2C 38 from Oryza sativa subsp. japonica (Rice).